Consider the following 1081-residue polypeptide: MSWLRSSPLRQSGNGGGGGVSTGHSSTGSLRQRPIDAATDCDPRACYDSFCKHWQQAYDIIQHYAPPTHDDVLGVVSHLDYMVTLLLVELHHCNKVSLPSTDASAAPAAPCLEYLLSENLLDKLYEWACTTGRYANAVRLEQLKLYELLVSHSRHQLLCHEPFLRPLLKILASSQGEIFPPDLEKRLVILLNQLCVVLMQNVHLLDLFFFSAQTQVQEQIQNGNVPPPKSGTTTNFIIFSLLIPYVHREGSLGHQARDALLLCMALSQKNSNIGTYIAQYSSICPLLVTGLGGLYSRLPNSIEISSIDWHRITPDDVTEIPELTLFMNALEFCNAVVQVAHEMIKQQLLDFMYQGFIVPVLGPAVLQTLKGKHFQTNIDSQISAMSYLDLILRSITEPGLLRAFVKFLLDTEKFDGERILDSLVERLNSPDANLCMVTMALFDTLLGLHCEDLMLELLLKFMLPGKHVPISHRHKINKIDPYLNSSDFFLELSPDVLKRARDLARPKSVHEQQAPSGATGEQPIQPLAWPSLPSPVMSKTIGANWNYYGLHTGDSLYANLQAYLFEAHWRIAQCQRDCLKWANSYRYQKWPRHGQARVHAHALELARQFFSEFGGGPPAIASESAGEKQLDSLQSIGESSGYESFKWRPADEESDATDLTVTTTTASEADLEHNSSSVSSGMGGGGGAAAGRRGEVWRISHTNRNELLLTDLDFSEDLFAQGTVSLGPFLNAIWGKLQTFTSNSLYVNLHLTGLITRLAWYPLPLIHSLLLRSDIAITSDTPSFHQVLRILKQQIDAELPVTEDSLEIIDVARSSLIDREFRLVNARKGNENSPLHHHQQPQTTLSQQQQQQQGQQRSAYATLSAATPVQATQTSAYDPFKRSDNKRKSISKSISSMFSRRSTPNPPSSAASSGLSQIYAFFTGAASTLVGNNNNNSGSGGQSQPFSSTGTGTCETSLSTNPQSGAAAARSTGTATTANGNSSNSNISIGGSTQTLSGHSNTTTYSSSTLHGLDGGPQTGSFNSEPASLDSVASMGIIASTSGTERTRDVALCAVLLDEWLKELAAIAQEQSVVLVTDQLL.

Residues 1 to 11 (MSWLRSSPLRQ) are compositionally biased toward polar residues. 5 disordered regions span residues 1–31 (MSWLRSSPLRQSGNGGGGGVSTGHSSTGSLR), 504–524 (ARPKSVHEQQAPSGATGEQPI), 650–685 (ADEESDATDLTVTTTTASEADLEHNSSSVSSGMGGG), 830–913 (NENS…AASS), and 933–1027 (NNNN…SEPA). Serine 508 is subject to Phosphoserine. Residues 657-668 (TDLTVTTTTASE) are compositionally biased toward low complexity. The residue at position 833 (serine 833) is a Phosphoserine. Over residues 840-856 (QPQTTLSQQQQQQQGQQ) the composition is skewed to low complexity. The segment covering 857 to 876 (RSAYATLSAATPVQATQTSA) has biased composition (polar residues). Composition is skewed to low complexity over residues 891–913 (SKSISSMFSRRSTPNPPSSAASS) and 933–953 (NNNNSGSGGQSQPFSSTGTGT). Positions 954–963 (CETSLSTNPQ) are enriched in polar residues. Residues 964–993 (SGAAAARSTGTATTANGNSSNSNISIGGST) are compositionally biased toward low complexity. Polar residues predominate over residues 994-1010 (QTLSGHSNTTTYSSSTL).

Belongs to the FHIP family.

The sequence is that of FHIP family protein GA25918 from Drosophila pseudoobscura pseudoobscura (Fruit fly).